The primary structure comprises 337 residues: Ribosomal RNA small subunit methyltransferase C (337 aa).

This sequence belongs to the methyltransferase superfamily. RsmC family. As to quaternary structure, monomer.

It localises to the cytoplasm. The enzyme catalyses guanosine(1207) in 16S rRNA + S-adenosyl-L-methionine = N(2)-methylguanosine(1207) in 16S rRNA + S-adenosyl-L-homocysteine + H(+). Specifically methylates the guanine in position 1207 of 16S rRNA in the 30S particle. This is Ribosomal RNA small subunit methyltransferase C from Acinetobacter baumannii (strain AB307-0294).